Consider the following 237-residue polypeptide: tRNA (guanine-N(1)-)-methyltransferase (237 aa).

Residues Gly-113 and 133 to 138 (MGDYIL) contribute to the S-adenosyl-L-methionine site.

The protein belongs to the RNA methyltransferase TrmD family. As to quaternary structure, homodimer.

The protein resides in the cytoplasm. The enzyme catalyses guanosine(37) in tRNA + S-adenosyl-L-methionine = N(1)-methylguanosine(37) in tRNA + S-adenosyl-L-homocysteine + H(+). Its function is as follows. Specifically methylates guanosine-37 in various tRNAs. In Wolinella succinogenes (strain ATCC 29543 / DSM 1740 / CCUG 13145 / JCM 31913 / LMG 7466 / NCTC 11488 / FDC 602W) (Vibrio succinogenes), this protein is tRNA (guanine-N(1)-)-methyltransferase.